The sequence spans 202 residues: Coiled-coil domain-containing protein 85B (202 aa).

Met-1 is modified (N-acetylmethionine). Coiled-coil stretches lie at residues 44–82 (RLMQ…DLCC) and 118–141 (QKLA…KELC). Residues 152–162 (GGPGGAVGSGA) are compositionally biased toward gly residues. The tract at residues 152–202 (GGPGGAVGSGAGPTPELALPPCGPRDLGDGSSSTGSVGSPDQLPLACSPDD) is disordered. Residues 180–190 (DGSSSTGSVGS) are compositionally biased toward low complexity.

It belongs to the CCDC85 family. As to quaternary structure, interacts with CEBPB. May interact with CEBPD. Interacts with EURL. Interacts with MCRS1. Interacts with TCF7L2; competes with CTNNB1. Interacts with ANKRD26. Interacts with the beta-catenin family proteins ARVCF, CTNND1, CTNND2 and PKP4. In terms of tissue distribution, expressed in white and brown adipose tissue.

The protein localises to the nucleus. It localises to the cytoplasm. The protein resides in the cytoskeleton. Its subcellular location is the microtubule organizing center. It is found in the centrosome. The protein localises to the cell junction. It localises to the adherens junction. Functions as a transcriptional repressor. May inhibit the activity of CTNNB1 in a TP53-dependent manner and thus regulate cell growth. May function in adipocyte differentiation, negatively regulating mitotic clonal expansion. Plays a role in cell-cell adhesion and epithelium development through its interaction with proteins of the beta-catenin family. This Mus musculus (Mouse) protein is Coiled-coil domain-containing protein 85B (Ccdc85b).